Reading from the N-terminus, the 103-residue chain is Astacin-like peptidase p16 (103 aa).

One can recognise a Peptidase M12A domain in the interval 1–103; the sequence is NAIPGQHYRW…DAFSRDGSPM (103 aa).

Requires Zn(2+) as cofactor.

Functionally, active against casein. Has a role as a digestive enzyme. This is Astacin-like peptidase p16 from Argiope aurantia (Black-and-yellow garden spider).